Consider the following 178-residue polypeptide: MDQRRVEDIAQIGAYSLPYDIVNIVYGAIVIYRASQEGKDPLAYASNKQGFKEAVKKLIKLGVIEKTTPYSLKKEYEEQVEKFDEIINYEDYERARYELYKLSEKADNLFTSSLVLYASVFLSLSELKPEILKIINEYIDQQTKVDYGKWIVIGIATASVLFAIASVLIHILAHVSIW.

This protein is non-essential for virus function. This is an uncharacterized protein from Sulfolobus spindle-shape virus 1 (SSV1).